Reading from the N-terminus, the 71-residue chain is Natterin-P (71 aa).

The signal sequence occupies residues 1 to 18 (MKLLVLLVTLLVLSWTSA). Residues 19 to 45 (EDLGDQEILENNEDNNHESELGEPAAQ) constitute a propeptide that is removed on maturation. Over residues 22 to 31 (GDQEILENNE) the composition is skewed to acidic residues. A disordered region spans residues 22–54 (GDQEILENNEDNNHESELGEPAAQHTDDETSQL). Cysteines 62 and 71 form a disulfide.

It belongs to the natterin family. In terms of tissue distribution, expressed by the venom gland.

The protein localises to the secreted. Inhibited by tissue-kallikrein inhibitor TKI and trasylol. Plasma kallikrein inhibitor PKSI527 and classical inhibitors of serine-, metallo-, thiol- or aspartate-peptidases evokes a minor inhibition of the peptide digestion. Its function is as follows. Shows nociceptive, edema-inducing and kininogenase activity with release of kallidin from low molecular weight kininogen. The cleavage occurs at Met-Lys bonds. The sequence is that of Natterin-P from Thalassophryne nattereri (Copper Joe toadfish).